The primary structure comprises 150 residues: Small ribosomal subunit protein uS11 (150 aa).

The interval 130 to 150 (DVTPIPSDSTRRKSGRRGRRL) is disordered. Basic residues predominate over residues 141-150 (RKSGRRGRRL).

The protein belongs to the universal ribosomal protein uS11 family.

This Lupinus luteus (European yellow lupine) protein is Small ribosomal subunit protein uS11 (RPS14).